Reading from the N-terminus, the 318-residue chain is Olfactory receptor 5G25 (318 aa).

Residues 1 to 25 (MMHRNQTVVTEFFFTGLTSSFHLQI) are Extracellular-facing. N-linked (GlcNAc...) asparagine glycosylation is present at Asn-5. A helical transmembrane segment spans residues 26-46 (VLFLTFLCVYLATLLGNLGMI). Over 47 to 54 (ILIHQDTR) the chain is Cytoplasmic. Residues 55 to 75 (LHIPMYFFLSHLSFVDACSSS) traverse the membrane as a helical segment. The Extracellular segment spans residues 76 to 99 (VISPKMLSDIFVDKKVISFLGCAI). An intrachain disulfide couples Cys-97 to Cys-189. A helical membrane pass occupies residues 100 to 120 (QFCLFSQFVVTECFLLASMAY). At 121-133 (DRYVAICKPLLYT) the chain is on the cytoplasmic side. Residues 134–154 (LIMSQRVCVQLVIGPYSIGLI) form a helical membrane-spanning segment. Residues 155–196 (STVVHTTSAFILPYCGPNLINHFFCDLLPVLSLACADTQMNK) lie on the Extracellular side of the membrane. The helical transmembrane segment at 197 to 217 (HLLFIMAGILGVFSGIIILVS) threads the bilayer. Residues 218–237 (YVYIAITILKINSADGRRKA) are Cytoplasmic-facing. Residues 238 to 258 (FSTCSSHLTAVSILYGTLFFI) form a helical membrane-spanning segment. Residues 259–271 (YVRPSSSFSLDIN) are Extracellular-facing. Residues 272-292 (KVVSLFYTAVIPMLNPFIYSL) form a helical membrane-spanning segment. The Cytoplasmic segment spans residues 293 to 318 (RNKEVKDALIRTFEKKFCYSLQDKIL).

It belongs to the G-protein coupled receptor 1 family.

The protein resides in the cell membrane. Functionally, potential odorant receptor. This is Olfactory receptor 5G25 from Mus musculus (Mouse).